Here is a 151-residue protein sequence, read N- to C-terminus: Transcriptional regulator MraZ (151 aa).

2 SpoVT-AbrB domains span residues 5 to 52 (ANAV…PLDE) and 81 to 124 (AVDL…DEDA).

The protein belongs to the MraZ family. In terms of assembly, forms oligomers.

The protein localises to the cytoplasm. Its subcellular location is the nucleoid. The chain is Transcriptional regulator MraZ from Pseudomonas putida (strain ATCC 700007 / DSM 6899 / JCM 31910 / BCRC 17059 / LMG 24140 / F1).